A 244-amino-acid chain; its full sequence is Isoprenyl transferase (244 aa).

The active site involves Asp20. Asp20 contacts Mg(2+). Substrate is bound by residues 21-24 (GNGR), Trp25, Arg33, His37, and 65-67 (SSE). Asn68 serves as the catalytic Proton acceptor. Residues Trp69, Arg71, Arg188, and 194–196 (RIS) each bind substrate. Residue Glu207 coordinates Mg(2+).

This sequence belongs to the UPP synthase family. Homodimer. The cofactor is Mg(2+).

In terms of biological role, catalyzes the condensation of isopentenyl diphosphate (IPP) with allylic pyrophosphates generating different type of terpenoids. The polypeptide is Isoprenyl transferase (Rhodopirellula baltica (strain DSM 10527 / NCIMB 13988 / SH1)).